Here is a 505-residue protein sequence, read N- to C-terminus: MSSIDRSQSAGGTRTYEVRTYGCQMNVHDSERLSGLLEDAGYVRAPEGADGDADVVVFNTCAVRENADNKLYGNLGHLAPKKASRPGMQIAVGGCLAQKDRDTIVKRAPWVDVVFGTHNIGKLPVLLERARVQEEAQVEIAESLEAFPSTLPTRRESAYAAWVSISVGCNNTCTFCIVPALRGKEKDRRPGDILAEVEALVAEGVSEITLLGQNVNAYGSDIGDREAFSKLLRACGNIDGLERVRFTSPHPRDFTDDVIAAMAETPNAMPQLHMPLQSGSDPVLKAMRRSYRQERYLGIIEKVRAAIPHAAITTDIIVGFPGETEEDFEQTLHVVREARFAQAFTFQYSKRPGTPAAEMENQIPKAVVQERYERLVALQEEISWDENKKQVGRTLELMVAEGEGRKDGATHRLSGRAPDNRLVHFTKPDQEVRPGDVVTVEITYAAPHHLLAEGAVLDVRRTRAGDAWEKRNTAEQAKPAGVLLGLPKIGVPEPQPVVASGCGCD.

An MTTase N-terminal domain is found at 14–132 (RTYEVRTYGC…LPVLLERARV (119 aa)). [4Fe-4S] cluster contacts are provided by Cys23, Cys61, Cys95, Cys169, Cys173, and Cys176. Residues 155-386 (RESAYAAWVS…ALQEEISWDE (232 aa)) enclose the Radical SAM core domain. The 69-residue stretch at 388 to 456 (KKQVGRTLEL…PHHLLAEGAV (69 aa)) folds into the TRAM domain.

It belongs to the methylthiotransferase family. MiaB subfamily. In terms of assembly, monomer. [4Fe-4S] cluster is required as a cofactor.

The protein resides in the cytoplasm. The enzyme catalyses N(6)-dimethylallyladenosine(37) in tRNA + (sulfur carrier)-SH + AH2 + 2 S-adenosyl-L-methionine = 2-methylsulfanyl-N(6)-dimethylallyladenosine(37) in tRNA + (sulfur carrier)-H + 5'-deoxyadenosine + L-methionine + A + S-adenosyl-L-homocysteine + 2 H(+). Its function is as follows. Catalyzes the methylthiolation of N6-(dimethylallyl)adenosine (i(6)A), leading to the formation of 2-methylthio-N6-(dimethylallyl)adenosine (ms(2)i(6)A) at position 37 in tRNAs that read codons beginning with uridine. This is tRNA-2-methylthio-N(6)-dimethylallyladenosine synthase from Streptomyces coelicolor (strain ATCC BAA-471 / A3(2) / M145).